The primary structure comprises 395 residues: Aspergillopepsin-1 (395 aa).

The N-terminal stretch at methionine 1–alanine 20 is a signal peptide. A propeptide spans valine 21–alanine 70 (activation peptide). The Peptidase A1 domain maps to tyrosine 86–alanine 392. Catalysis depends on residues aspartate 102 and aspartate 284. Cysteines 320 and 355 form a disulfide.

This sequence belongs to the peptidase A1 family. In terms of assembly, monomer.

It is found in the secreted. The catalysed reaction is Hydrolysis of proteins with broad specificity. Generally favors hydrophobic residues in P1 and P1', but also accepts Lys in P1, which leads to activation of trypsinogen. Does not clot milk.. Secreted aspartic endopeptidase that allows assimilation of proteinaceous substrates. The scissile peptide bond is attacked by a nucleophilic water molecule activated by two aspartic residues in the active site. Shows a broad primary substrate specificity. Favors hydrophobic residues at the P1 and P1' positions, but also accepts a lysine residue in the P1 position, leading to the activation of trypsinogen and chymotrypsinogen A. This Aspergillus fumigatus (strain CBS 144.89 / FGSC A1163 / CEA10) (Neosartorya fumigata) protein is Aspergillopepsin-1 (pepA).